Reading from the N-terminus, the 347-residue chain is Biotin synthase (347 aa).

The 219-residue stretch at Ala40–Arg258 folds into the Radical SAM core domain. [4Fe-4S] cluster-binding residues include Cys55, Cys59, and Cys62. [2Fe-2S] cluster is bound by residues Cys99, Cys130, Cys190, and Arg262.

This sequence belongs to the radical SAM superfamily. Biotin synthase family. Homodimer. [4Fe-4S] cluster serves as cofactor. [2Fe-2S] cluster is required as a cofactor.

It catalyses the reaction (4R,5S)-dethiobiotin + (sulfur carrier)-SH + 2 reduced [2Fe-2S]-[ferredoxin] + 2 S-adenosyl-L-methionine = (sulfur carrier)-H + biotin + 2 5'-deoxyadenosine + 2 L-methionine + 2 oxidized [2Fe-2S]-[ferredoxin]. It functions in the pathway cofactor biosynthesis; biotin biosynthesis; biotin from 7,8-diaminononanoate: step 2/2. Functionally, catalyzes the conversion of dethiobiotin (DTB) to biotin by the insertion of a sulfur atom into dethiobiotin via a radical-based mechanism. The polypeptide is Biotin synthase (Stenotrophomonas maltophilia (strain K279a)).